The primary structure comprises 252 residues: Phosphate import ATP-binding protein PstB 2 (252 aa).

Residues 6 to 247 (ISINDLSVYF…PQHKETEDYI (242 aa)) form the ABC transporter domain. Residue 38-45 (GPSGSGKS) coordinates ATP.

The protein belongs to the ABC transporter superfamily. Phosphate importer (TC 3.A.1.7) family. In terms of assembly, the complex is composed of two ATP-binding proteins (PstB), two transmembrane proteins (PstC and PstA) and a solute-binding protein (PstS).

It is found in the cell membrane. The enzyme catalyses phosphate(out) + ATP + H2O = ADP + 2 phosphate(in) + H(+). Functionally, part of the ABC transporter complex PstSACB involved in phosphate import. Responsible for energy coupling to the transport system. In Streptococcus thermophilus (strain CNRZ 1066), this protein is Phosphate import ATP-binding protein PstB 2.